The chain runs to 360 residues: mRNA cap guanine-N(7) methyltransferase (360 aa).

The tract at residues 1–62 (MSSSNSRVHE…NRHENNGNAQ (62 aa)) is disordered. Basic and acidic residues predominate over residues 7–19 (RVHEEQPPTENRR). Residues 83–358 (SPIIQLKRFN…FYLAFAFEKR (276 aa)) enclose the mRNA cap 0 methyltransferase domain. 92 to 93 (NN) contributes to the mRNA binding site. S-adenosyl-L-methionine-binding residues include Lys96, Gly118, Asp140, Asp168, Gln191, and Tyr196.

Belongs to the class I-like SAM-binding methyltransferase superfamily. mRNA cap 0 methyltransferase family. As to quaternary structure, interacts with cdk9.

The protein localises to the nucleus. The enzyme catalyses a 5'-end (5'-triphosphoguanosine)-ribonucleoside in mRNA + S-adenosyl-L-methionine = a 5'-end (N(7)-methyl 5'-triphosphoguanosine)-ribonucleoside in mRNA + S-adenosyl-L-homocysteine. Responsible for methylating the 5'-cap structure of mRNAs. This is mRNA cap guanine-N(7) methyltransferase (pcm1) from Schizosaccharomyces pombe (strain 972 / ATCC 24843) (Fission yeast).